A 289-amino-acid chain; its full sequence is Phosphatidylglycerol--prolipoprotein diacylglyceryl transferase (289 aa).

A run of 4 helical transmembrane segments spans residues Ile-21 to Ile-41, Ile-53 to Ala-73, Ile-95 to Leu-115, and Ile-122 to Gly-142. A 1,2-diacyl-sn-glycero-3-phospho-(1'-sn-glycerol) is bound at residue Arg-143. Transmembrane regions (helical) follow at residues Pro-182–Phe-202, Gly-215–Leu-235, and Ile-247–Tyr-267.

This sequence belongs to the Lgt family.

Its subcellular location is the cell inner membrane. It catalyses the reaction L-cysteinyl-[prolipoprotein] + a 1,2-diacyl-sn-glycero-3-phospho-(1'-sn-glycerol) = an S-1,2-diacyl-sn-glyceryl-L-cysteinyl-[prolipoprotein] + sn-glycerol 1-phosphate + H(+). The protein operates within protein modification; lipoprotein biosynthesis (diacylglyceryl transfer). Its function is as follows. Catalyzes the transfer of the diacylglyceryl group from phosphatidylglycerol to the sulfhydryl group of the N-terminal cysteine of a prolipoprotein, the first step in the formation of mature lipoproteins. The chain is Phosphatidylglycerol--prolipoprotein diacylglyceryl transferase from Synechococcus elongatus (strain ATCC 33912 / PCC 7942 / FACHB-805) (Anacystis nidulans R2).